The following is a 185-amino-acid chain: Avirulence protein ATR39-1 (185 aa).

The signal sequence occupies residues 1–20 (MVKCTPLLALTVIVSAGSDA). The short motif at 49-66 (RVLRASDVPDEVAAGESR) is the RxLR-dEER element.

It belongs to the RxLR effector family.

The protein resides in the secreted. The protein localises to the host cell. In terms of biological role, secreted effector that acts as an elicitor of hypersensitive response (HR) specifically on plants carrying defense protein RPP39. The allele ATR39-1 is recognized by RPP39, whereas the ATR39-2 allele is not recognized. The polypeptide is Avirulence protein ATR39-1 (Hyaloperonospora arabidopsidis (strain Emoy2) (Downy mildew agent)).